Consider the following 389-residue polypeptide: S-adenosylmethionine synthase (389 aa).

His19 serves as a coordination point for ATP. Residue Asp21 coordinates Mg(2+). Glu47 serves as a coordination point for K(+). L-methionine contacts are provided by Glu60 and Gln103. A flexible loop region spans residues 103–113 (QSVDIAQGVSR). ATP-binding positions include 168-170 (DGK), 234-235 (RF), Asp243, 249-250 (RK), Ala266, and Lys270. Position 243 (Asp243) interacts with L-methionine. An L-methionine-binding site is contributed by Lys274.

Belongs to the AdoMet synthase family. As to quaternary structure, homotetramer; dimer of dimers. It depends on Mg(2+) as a cofactor. The cofactor is K(+).

It is found in the cytoplasm. It catalyses the reaction L-methionine + ATP + H2O = S-adenosyl-L-methionine + phosphate + diphosphate. It functions in the pathway amino-acid biosynthesis; S-adenosyl-L-methionine biosynthesis; S-adenosyl-L-methionine from L-methionine: step 1/1. Catalyzes the formation of S-adenosylmethionine (AdoMet) from methionine and ATP. The overall synthetic reaction is composed of two sequential steps, AdoMet formation and the subsequent tripolyphosphate hydrolysis which occurs prior to release of AdoMet from the enzyme. In Solidesulfovibrio magneticus (strain ATCC 700980 / DSM 13731 / RS-1) (Desulfovibrio magneticus), this protein is S-adenosylmethionine synthase.